Reading from the N-terminus, the 269-residue chain is Achromobactin transport ATP-binding protein CbrD (269 aa).

Residues 4 to 240 form the ABC transporter domain; that stretch reads ITSRELTLGY…ALVKTVFNLD (237 aa). 36-43 is an ATP binding site; the sequence is GSNGCGKS.

Belongs to the ABC transporter superfamily.

It localises to the cell inner membrane. Its function is as follows. Part of the binding-protein-dependent transport system CbrABCD for uptake of the siderophore achromobactin. Probably responsible for energy coupling to the transport system. The protein is Achromobactin transport ATP-binding protein CbrD (cbrD) of Dickeya dadantii (strain 3937) (Erwinia chrysanthemi (strain 3937)).